The primary structure comprises 1830 residues: Urea amidolyase (1830 aa).

ATP is bound by residues 115–122, Lys-740, Glu-823, and Asn-858; that span reads GAIVIGKT. In terms of domain architecture, Biotin carboxylation spans 625–1068; the sequence is PFETVLIANR…ATKILDSYDY (444 aa). The region spanning 744–941 is the ATP-grasp domain; sequence REIAEKAGVP…LVEWMLRIAA (198 aa). Residues 1752–1830 form the Biotinyl-binding domain; that stretch reads AVEEEYPEDA…DAGDLVAVIQ (79 aa). At Lys-1796 the chain carries N6-biotinyllysine.

Belongs to the DUR1,2 family. Monomer. Requires biotin as cofactor.

It carries out the reaction urea + hydrogencarbonate + ATP = urea-1-carboxylate + ADP + phosphate + H(+). The enzyme catalyses urea-1-carboxylate + H2O + 3 H(+) = 2 NH4(+) + 2 CO2. It functions in the pathway nitrogen metabolism; urea degradation; CO(2) and NH(3) from urea (allophanate route): step 1/2. Its pathway is nitrogen metabolism; urea degradation; CO(2) and NH(3) from urea (allophanate route): step 2/2. Involved in uracil catabolism. Hydrolysis of urea to ammonia and CO(2). In Lachancea kluyveri (Yeast), this protein is Urea amidolyase (DUR1,2).